Consider the following 100-residue polypeptide: Small ribosomal subunit protein eS24 (100 aa).

Belongs to the eukaryotic ribosomal protein eS24 family.

This Methanothermobacter thermautotrophicus (strain ATCC 29096 / DSM 1053 / JCM 10044 / NBRC 100330 / Delta H) (Methanobacterium thermoautotrophicum) protein is Small ribosomal subunit protein eS24.